A 155-amino-acid chain; its full sequence is Transcriptional repressor NrdR (155 aa).

The segment at 3 to 34 (CPFCSHFESKVVDSRPTDEGQAIRRRRECVSC) is a zinc-finger region. An ATP-cone domain is found at 49–139 (LIVVKKSGNR…VYREFKDINT (91 aa)).

Belongs to the NrdR family. Zn(2+) is required as a cofactor.

Negatively regulates transcription of bacterial ribonucleotide reductase nrd genes and operons by binding to NrdR-boxes. This Alkaliphilus metalliredigens (strain QYMF) protein is Transcriptional repressor NrdR.